Consider the following 192-residue polypeptide: MPSAPRKQSKTYKVPRRPFESARLDAELKLAGEYGLRNKHEIWRVALTLSKIRRAARELLTLDEKDPKRLFEGNAIIRRLVRLGILDESRMKLDYVLALRIEDFLERRLQTQVFKLGLAKSIHHARVLIFQRHIRVGKQIVNVPSFVVRLDAQKHIDFALSSPYGGGRPGRCKRKRLRSQQEGGEGEEAEEE.

A phosphoserine mark is found at S89 and S179. Positions 107-181 (RRLQTQVFKL…CKRKRLRSQQ (75 aa)) constitute an S4 RNA-binding domain. The disordered stretch occupies residues 166 to 192 (GGRPGRCKRKRLRSQQEGGEGEEAEEE).

This sequence belongs to the universal ribosomal protein uS4 family. In terms of assembly, component of the small ribosomal subunit (SSU). Mature yeast ribosomes consist of a small (40S) and a large (60S) subunit. The 40S small subunit contains 1 molecule of ribosomal RNA (18S rRNA) and at least 33 different proteins. The large 60S subunit contains 3 rRNA molecules (25S, 5.8S and 5S rRNA) and at least 46 different proteins. Interacts with snoRNA U3. uS11 interacts with MPP10. Component of the ribosomal small subunit (SSU) processome composed of at least 40 protein subunits and snoRNA U3.

Its subcellular location is the cytoplasm. Functionally, component of the ribosome, a large ribonucleoprotein complex responsible for the synthesis of proteins in the cell. The small ribosomal subunit (SSU) binds messenger RNAs (mRNAs) and translates the encoded message by selecting cognate aminoacyl-transfer RNA (tRNA) molecules. The large subunit (LSU) contains the ribosomal catalytic site termed the peptidyl transferase center (PTC), which catalyzes the formation of peptide bonds, thereby polymerizing the amino acids delivered by tRNAs into a polypeptide chain. The nascent polypeptides leave the ribosome through a tunnel in the LSU and interact with protein factors that function in enzymatic processing, targeting, and the membrane insertion of nascent chains at the exit of the ribosomal tunnel. uS4 is involved in nucleolar processing of pre-18S ribosomal RNA and ribosome assembly. In Schizosaccharomyces pombe (strain 972 / ATCC 24843) (Fission yeast), this protein is Small ribosomal subunit protein uS4B (rps902).